Here is an 825-residue protein sequence, read N- to C-terminus: MSSDTRQTSGGNARSKRRLTDAVDEDGRPTATAEDPTSNPKRQRVSRACDSCRSKKDKCDGAQPICSTCASLSRPCTYRANPKKRGLPTGYIRTLELLWGLVFNKIQGSEEVVRTLLRAANIPSHLATMGKESEGSDTLLSSWKNSIVLKEIERLLTFLEQPEGDQERSARGEIDSPADAEESSVLSPETLEWQLPDSIAVASQSPLASGPSPVRLPRPSTTRLVRDSGTQTIPLGEIEDLTTNGSSHDRPVIASNSAREEHRLPPNPWPLLDIYFSYTQCWFPILEKHDILRTAFRQGDDDQYNSPSAAGDNAALWAVLALASIQQTSISTTRQLSDLPEDRPDPDQLYAKARSLIPTESGTYQLGHIQALLILSLIKLGQQDCAAAWMLVGQAVRSAQSLGLNDPSDATGVEKTAGRSKHVFLGCFVLETLVAAKLGLLPSLRKTDLTKVGLINEDGLEEWHPWEDQTGLRPIESSRSFQRGPLHALSTFNRLLSLMCILNELCCVRQTPANSMSYLGTLERQLQLWVSALPTSYRIDLQTVSTKPASPHIFGLEMMYEAVATAISLQLAVQKNERNGLRRASEGSKRLVSLLQAYMETYSLSATCPTFGIALTLGLPLPCMKKTAPWAFEASHGINHKLQSFSAHLATVWIHNTGSQRRPRHATQQGTHPRSPMAISLPGNNMRLTNLIEESRTGNLSTTDSYLSPTWMRTSNDENAVLSLPTPASSLNIASGVETNPTSQQITHQHRSSVVGKPNSALIMSDLTTPFPASGHHYQQTYDDASLHFNSLADIESTSSAQRPRIAPDLDALFDELASLDGTDR.

The span at 1–12 shows a compositional bias: polar residues; it reads MSSDTRQTSGGN. The segment at 1–45 is disordered; the sequence is MSSDTRQTSGGNARSKRRLTDAVDEDGRPTATAEDPTSNPKRQRV. The span at 18–28 shows a compositional bias: basic and acidic residues; that stretch reads RLTDAVDEDGR. Positions 49–76 form a DNA-binding region, zn(2)-C6 fungal-type; sequence CDSCRSKKDKCDGAQPICSTCASLSRPC. Disordered regions lie at residues 160 to 186, 204 to 224, and 658 to 683; these read EQPEGDQERSARGEIDSPADAEESSVL, QSPLASGPSPVRLPRPSTTRL, and GSQRRPRHATQQGTHPRSPMAISLPG. Over residues 165–174 the composition is skewed to basic and acidic residues; it reads DQERSARGEI. Over residues 658–672 the composition is skewed to polar residues; that stretch reads GSQRRPRHATQQGTH.

The protein resides in the nucleus. Functionally, transcription activation of genes for enzymes and proteins of quinate metabolism by binding to a 16 base-pair sequence (consensus 5'-GGATAANNNNTTATCC-3') in front of each qut gene. The chain is Quinic acid utilization activator (qutA) from Emericella nidulans (strain FGSC A4 / ATCC 38163 / CBS 112.46 / NRRL 194 / M139) (Aspergillus nidulans).